Consider the following 725-residue polypeptide: Prolyl 3-hydroxylase 1 (725 aa).

Residues 1–14 (MALLLPLLPLLVWA) form the signal peptide. The stretch at 36 to 69 (PDALFAAGAEAYARGDWPAVVLQMERALRARAAI) is one TPR 1 repeat. Asparagine 82 carries an N-linked (GlcNAc...) asparagine glycan. TPR repeat units follow at residues 136 to 169 (RSPY…NPEH), 198 to 231 (HMTE…YFVA), and 294 to 327 (PSHF…FPND). Residues 394–441 (KRLREKQKVERETAARISEEIGNLMKEIETLVEEKAKESAEMSKFIRE) are a coiled coil. 2 N-linked (GlcNAc...) asparagine glycosylation sites follow: asparagine 460 and asparagine 533. One can recognise a Fe2OG dioxygenase domain in the interval 557 to 671 (SHLVCRTAID…RCAIALWFTL (115 aa)). Fe cation is bound by residues histidine 580, aspartate 582, and histidine 652. Arginine 662 is an active-site residue. A compositionally biased stretch (polar residues) spans 701–715 (ETSAEQEPTAATSTA). The tract at residues 701–725 (ETSAEQEPTAATSTAGLHAAGKDEL) is disordered. Positions 722–725 (KDEL) match the Prevents secretion from ER motif.

This sequence belongs to the leprecan family. As to quaternary structure, binds unfolded collagen in a complex with CYPB and CRTAP. The cofactor is Fe cation. L-ascorbate serves as cofactor. Expressed in embryonic dermis, tendon, cartilage, liver and kidney. Expression in the kidney is restricted to the calyx. In the liver, expression is restricted to the interlobular septum.

The protein localises to the endoplasmic reticulum. The catalysed reaction is L-prolyl-[collagen] + 2-oxoglutarate + O2 = trans-3-hydroxy-L-prolyl-[collagen] + succinate + CO2. Has prolyl 3-hydroxylase activity catalyzing the post-translational formation of 3-hydroxyproline in -Xaa-Pro-Gly-sequences in collagens, especially types IV and V. May be involved in the secretoty pathway of cells. Has growth suppressive activity in fibroblasts. This is Prolyl 3-hydroxylase 1 from Gallus gallus (Chicken).